Reading from the N-terminus, the 576-residue chain is 5'-nucleotidase (576 aa).

The first 28 residues, 1–28 (MRPAAATAPKWLLLALSALLPLWPTAKS), serve as a signal peptide directing secretion. 2 residues coordinate Zn(2+): D38 and H40. C53 and C59 are disulfide-bonded. N55 carries an N-linked (GlcNAc...) asparagine glycan. The Zn(2+) site is built by D87, N119, H222, and H245. N-linked (GlcNAc...) asparagine glycosylation is found at N313, N335, and N349. Intrachain disulfides connect C355–C360 and C367–C389. Residue R356 coordinates AMP. R356 contacts IMP. The AMP site is built by N392 and R397. The IMP site is built by N392 and R397. An N-linked (GlcNAc...) asparagine glycan is attached at N405. F419 provides a ligand contact to AMP. F419 provides a ligand contact to IMP. C478 and C481 are oxidised to a cystine. 2 residues coordinate AMP: Y502 and D508. IMP contacts are provided by Y502 and D508. A lipid anchor (GPI-anchor amidated serine) is attached at S551. A propeptide spans 552 to 576 (AASHYQGSFPLIILSFWAVILVLYQ) (removed in mature form).

It belongs to the 5'-nucleotidase family. As to quaternary structure, homodimer. It depends on Zn(2+) as a cofactor. As to expression, expressed in the brain.

The protein localises to the cell membrane. It carries out the reaction a ribonucleoside 5'-phosphate + H2O = a ribonucleoside + phosphate. The enzyme catalyses a 2'-deoxyribonucleoside 5'-phosphate + H2O = a 2'-deoxyribonucleoside + phosphate. The catalysed reaction is dTMP + H2O = thymidine + phosphate. It catalyses the reaction CMP + H2O = cytidine + phosphate. It carries out the reaction IMP + H2O = inosine + phosphate. The enzyme catalyses AMP + H2O = adenosine + phosphate. The catalysed reaction is GMP + H2O = guanosine + phosphate. It catalyses the reaction UMP + H2O = uridine + phosphate. It carries out the reaction dAMP + H2O = 2'-deoxyadenosine + phosphate. The enzyme catalyses dCMP + H2O = 2'-deoxycytidine + phosphate. Its function is as follows. Catalyzes the hydrolysis of nucleotide monophosphates, releasing inorganic phosphate and the corresponding nucleoside. AMP is the preferred substrate but can also hydrolyze CMP and GMP. Shows a preference for ribonucleotide monophosphates over their equivalent deoxyribose forms. Other substrates include IMP, UMP, dAMP, dCMP, dTMP, NAD and NMN. The chain is 5'-nucleotidase (Nt5e) from Rattus norvegicus (Rat).